Reading from the N-terminus, the 520-residue chain is GMP synthase [glutamine-hydrolyzing] (520 aa).

Residues 9 to 202 form the Glutamine amidotransferase type-1 domain; it reads SVLIVDFGSQ…IHNIAGIKGD (194 aa). Cys-86 functions as the Nucleophile in the catalytic mechanism. Active-site residues include His-176 and Glu-178. The GMPS ATP-PPase domain occupies 203-395; sequence WSMSAYRQKA…LGLPDSFIGR (193 aa). ATP is bound at residue 230 to 236; the sequence is SGGVDSS.

As to quaternary structure, homodimer.

The catalysed reaction is XMP + L-glutamine + ATP + H2O = GMP + L-glutamate + AMP + diphosphate + 2 H(+). It participates in purine metabolism; GMP biosynthesis; GMP from XMP (L-Gln route): step 1/1. Functionally, catalyzes the synthesis of GMP from XMP. This Rhizobium johnstonii (strain DSM 114642 / LMG 32736 / 3841) (Rhizobium leguminosarum bv. viciae) protein is GMP synthase [glutamine-hydrolyzing].